Reading from the N-terminus, the 57-residue chain is Small ribosomal subunit protein bS21 (57 aa).

This sequence belongs to the bacterial ribosomal protein bS21 family.

This chain is Small ribosomal subunit protein bS21, found in Bacillus cytotoxicus (strain DSM 22905 / CIP 110041 / 391-98 / NVH 391-98).